Here is a 763-residue protein sequence, read N- to C-terminus: Xaa-Pro dipeptidyl-peptidase (763 aa).

Residues S349, D469, and H499 each act as charge relay system in the active site.

The protein belongs to the peptidase S15 family. In terms of assembly, homodimer.

It is found in the cytoplasm. It catalyses the reaction Hydrolyzes Xaa-Pro-|- bonds to release unblocked, N-terminal dipeptides from substrates including Ala-Pro-|-p-nitroanilide and (sequentially) Tyr-Pro-|-Phe-Pro-|-Gly-Pro-|-Ile.. In terms of biological role, removes N-terminal dipeptides sequentially from polypeptides having unsubstituted N-termini provided that the penultimate residue is proline. This is Xaa-Pro dipeptidyl-peptidase from Streptococcus macedonicus (Streptococcus gallolyticus macedonicus).